We begin with the raw amino-acid sequence, 138 residues long: Cysteine desulfuration protein SufE (138 aa).

Cys-51 acts as the Cysteine persulfide intermediate in catalysis.

It belongs to the SufE family. Homodimer. Interacts with SufS.

The protein resides in the cytoplasm. Its pathway is cofactor biosynthesis; iron-sulfur cluster biosynthesis. Functionally, participates in cysteine desulfuration mediated by SufS. Cysteine desulfuration mobilizes sulfur from L-cysteine to yield L-alanine and constitutes an essential step in sulfur metabolism for biosynthesis of a variety of sulfur-containing biomolecules. Functions as a sulfur acceptor for SufS, by mediating the direct transfer of the sulfur atom from the S-sulfanylcysteine of SufS, an intermediate product of cysteine desulfuration process. The polypeptide is Cysteine desulfuration protein SufE (Citrobacter koseri (strain ATCC BAA-895 / CDC 4225-83 / SGSC4696)).